Here is a 120-residue protein sequence, read N- to C-terminus: NAD(P)H-quinone oxidoreductase subunit 3, chloroplastic (120 aa).

The next 3 membrane-spanning stretches (helical) occupy residues Ile9–Gly29, Met64–Val84, and Ile88–Ser108.

The protein belongs to the complex I subunit 3 family. In terms of assembly, NDH is composed of at least 16 different subunits, 5 of which are encoded in the nucleus.

The protein resides in the plastid. It is found in the chloroplast thylakoid membrane. It carries out the reaction a plastoquinone + NADH + (n+1) H(+)(in) = a plastoquinol + NAD(+) + n H(+)(out). The catalysed reaction is a plastoquinone + NADPH + (n+1) H(+)(in) = a plastoquinol + NADP(+) + n H(+)(out). In terms of biological role, NDH shuttles electrons from NAD(P)H:plastoquinone, via FMN and iron-sulfur (Fe-S) centers, to quinones in the photosynthetic chain and possibly in a chloroplast respiratory chain. The immediate electron acceptor for the enzyme in this species is believed to be plastoquinone. Couples the redox reaction to proton translocation, and thus conserves the redox energy in a proton gradient. The protein is NAD(P)H-quinone oxidoreductase subunit 3, chloroplastic of Nymphaea alba (White water-lily).